The sequence spans 395 residues: Xylose isomerase (395 aa).

Active-site residues include His-54 and Asp-57. Residues Glu-181, Glu-217, His-220, Asp-245, Asp-255, Asp-257, and Asp-293 each contribute to the Mg(2+) site.

The protein belongs to the xylose isomerase family. Homotetramer. Mg(2+) serves as cofactor.

It is found in the cytoplasm. The catalysed reaction is alpha-D-xylose = alpha-D-xylulofuranose. The polypeptide is Xylose isomerase (Pseudarthrobacter chlorophenolicus (strain ATCC 700700 / DSM 12829 / CIP 107037 / JCM 12360 / KCTC 9906 / NCIMB 13794 / A6) (Arthrobacter chlorophenolicus)).